A 320-amino-acid chain; its full sequence is ATP synthase gamma chain (320 aa).

The protein belongs to the ATPase gamma chain family. F-type ATPases have 2 components, CF(1) - the catalytic core - and CF(0) - the membrane proton channel. CF(1) has five subunits: alpha(3), beta(3), gamma(1), delta(1), epsilon(1). CF(0) has three main subunits: a, b and c.

It is found in the cell membrane. Produces ATP from ADP in the presence of a proton gradient across the membrane. The gamma chain is believed to be important in regulating ATPase activity and the flow of protons through the CF(0) complex. In Lactobacillus helveticus (strain DPC 4571), this protein is ATP synthase gamma chain.